Here is a 1132-residue protein sequence, read N- to C-terminus: Tyrosine-protein kinase JAK2 (1132 aa).

An interaction with cytokine/interferon/growth hormone receptors region spans residues 1–239; it reads MGMACLTMTE…RYRFRRFIQQ (239 aa). Residues 37-380 form the FERM domain; that stretch reads PVLLVYLYHS…GYYRLTADAH (344 aa). Tyr-119 is subject to Phosphotyrosine; by autocatalysis. Tyr-372 and Tyr-373 each carry phosphotyrosine. Residues 401 to 482 form the SH2; atypical domain; the sequence is HGPISMDFAI…SLKDLLNCYQ (82 aa). A Phosphoserine modification is found at Ser-523. The 265-residue stretch at 545-809 folds into the Protein kinase 1 domain; that stretch reads LIFNESLGQG…AIIRDLNSLF (265 aa). Tyr-570 and Tyr-813 each carry phosphotyrosine. A Protein kinase 2 domain is found at 849–1126; the sequence is LKFLQQLGKG…RDLALRVDQI (278 aa). 855 to 863 serves as a coordination point for ATP; it reads LGKGNFGSV. Position 868 is a phosphotyrosine; by autocatalysis (Tyr-868). Residue Lys-882 coordinates ATP. A phosphotyrosine; by autocatalysis mark is found at Tyr-966 and Tyr-972. Asp-976 functions as the Proton acceptor in the catalytic mechanism. Phosphotyrosine; by autocatalysis is present on residues Tyr-1007 and Tyr-1008.

The protein belongs to the protein kinase superfamily. Tyr protein kinase family. JAK subfamily. Interacts with IL23R, SKB1 and STAM2. Interacts with EPOR. Interacts with LYN. Interacts with SIRPA. Interacts with SH2B1. Interacts with TEC. Interacts with IFNGR2 (via intracellular domain). Interacts with LEPR (Isoform B). Interacts with HSP90AB1; promotes functional activation in a heat shock-dependent manner. Interacts with STRA6. Interacts with RHEX; this interaction occurs in a erythropoietin (EPO)-dependent manner. Interacts with ASB2; the interaction targets JAK2 for Notch-induced proteasomal degradation. Mg(2+) serves as cofactor. Post-translationally, autophosphorylated, leading to regulate its activity. Leptin promotes phosphorylation on tyrosine residues, including phosphorylation on Tyr-813. Autophosphorylation on Tyr-119 in response to EPO down-regulates its kinase activity. Autophosphorylation on Tyr-868, Tyr-966 and Tyr-972 in response to growth hormone (GH) are required for maximal kinase activity. Also phosphorylated by TEC. Phosphorylated on tyrosine residues in response to interferon gamma signaling. Phosphorylated on tyrosine residues in response to a signaling cascade that is activated by increased cellular retinol. In terms of processing, undergoes Notch-induced ubiquitination and subsequent proteasomal degradation which is mediated by ASB1 or ASB2, the substrate-recognition components of probable ECS E3 ubiquitin-protein ligase complexes.

It localises to the endomembrane system. Its subcellular location is the cytoplasm. The protein resides in the nucleus. The catalysed reaction is L-tyrosyl-[protein] + ATP = O-phospho-L-tyrosyl-[protein] + ADP + H(+). Its activity is regulated as follows. Regulated by autophosphorylation, can both activate or decrease activity. Heme regulates its activity by enhancing the phosphorylation on Tyr-1007 and Tyr-1008. Non-receptor tyrosine kinase involved in various processes such as cell growth, development, differentiation or histone modifications. Mediates essential signaling events in both innate and adaptive immunity. In the cytoplasm, plays a pivotal role in signal transduction via its association with type I receptors such as growth hormone (GHR), prolactin (PRLR), leptin (LEPR), erythropoietin (EPOR), thrombopoietin (THPO); or type II receptors including IFN-alpha, IFN-beta, IFN-gamma and multiple interleukins. Following ligand-binding to cell surface receptors, phosphorylates specific tyrosine residues on the cytoplasmic tails of the receptor, creating docking sites for STATs proteins. Subsequently, phosphorylates the STATs proteins once they are recruited to the receptor. Phosphorylated STATs then form homodimer or heterodimers and translocate to the nucleus to activate gene transcription. For example, cell stimulation with erythropoietin (EPO) during erythropoiesis leads to JAK2 autophosphorylation, activation, and its association with erythropoietin receptor (EPOR) that becomes phosphorylated in its cytoplasmic domain. Then, STAT5 (STAT5A or STAT5B) is recruited, phosphorylated and activated by JAK2. Once activated, dimerized STAT5 translocates into the nucleus and promotes the transcription of several essential genes involved in the modulation of erythropoiesis. Part of a signaling cascade that is activated by increased cellular retinol and that leads to the activation of STAT5 (STAT5A or STAT5B). In addition, JAK2 mediates angiotensin-2-induced ARHGEF1 phosphorylation. Plays a role in cell cycle by phosphorylating CDKN1B. Cooperates with TEC through reciprocal phosphorylation to mediate cytokine-driven activation of FOS transcription. In the nucleus, plays a key role in chromatin by specifically mediating phosphorylation of 'Tyr-41' of histone H3 (H3Y41ph), a specific tag that promotes exclusion of CBX5 (HP1 alpha) from chromatin. Up-regulates the potassium voltage-gated channel activity of KCNA3. This is Tyrosine-protein kinase JAK2 from Pongo abelii (Sumatran orangutan).